We begin with the raw amino-acid sequence, 1001 residues long: 2-oxoglutarate dehydrogenase E1 component (1001 aa).

It belongs to the alpha-ketoglutarate dehydrogenase family. Homodimer. Part of the 2-oxoglutarate dehydrogenase (OGDH) complex composed of E1 (2-oxoglutarate dehydrogenase), E2 (dihydrolipoamide succinyltransferase) and E3 (dihydrolipoamide dehydrogenase); the complex contains multiple copies of the three enzymatic components (E1, E2 and E3). It depends on thiamine diphosphate as a cofactor.

It catalyses the reaction N(6)-[(R)-lipoyl]-L-lysyl-[protein] + 2-oxoglutarate + H(+) = N(6)-[(R)-S(8)-succinyldihydrolipoyl]-L-lysyl-[protein] + CO2. E1 component of the 2-oxoglutarate dehydrogenase (OGDH) complex which catalyzes the decarboxylation of 2-oxoglutarate, the first step in the conversion of 2-oxoglutarate to succinyl-CoA and CO(2). In Brucella anthropi (strain ATCC 49188 / DSM 6882 / CCUG 24695 / JCM 21032 / LMG 3331 / NBRC 15819 / NCTC 12168 / Alc 37) (Ochrobactrum anthropi), this protein is 2-oxoglutarate dehydrogenase E1 component.